The sequence spans 329 residues: Acrosin (329 aa).

The first 17 residues, 1–17 (MLPTAVLLVLAVSVVAR), serve as a signal peptide directing secretion. Asparagine 19 carries an N-linked (GlcNAc...) asparagine glycan. 6 disulfides stabilise this stretch: cysteine 22-cysteine 152, cysteine 26-cysteine 160, cysteine 71-cysteine 87, cysteine 175-cysteine 244, cysteine 207-cysteine 223, and cysteine 234-cysteine 264. Residues 40–288 (IIGGQDAAHG…YLNWIASKIG (249 aa)) form the Peptidase S1 domain. Residues histidine 86 and aspartate 140 each act as charge relay system in the active site. A glycan (N-linked (GlcNAc...) asparagine) is linked at asparagine 208. The active-site Charge relay system is serine 238.

It belongs to the peptidase S1 family. In terms of assembly, heavy chain (catalytic) and a light chain linked by two disulfide bonds. Forms a heterodimer with SERPINA5.

The catalysed reaction is Preferential cleavage: Arg-|-Xaa, Lys-|-Xaa.. Its activity is regulated as follows. Inhibited by SERPINA5. Acrosin is the major protease of mammalian spermatozoa. It is a serine protease of trypsin-like cleavage specificity, it is synthesized in a zymogen form, proacrosin and stored in the acrosome. This chain is Acrosin (ACR), found in Ovis aries (Sheep).